A 396-amino-acid chain; its full sequence is Elongation factor Tu (396 aa).

The region spanning 10 to 205 is the tr-type G domain; the sequence is KPHVNIGTIG…AVDESIPDPV (196 aa). Residues 19 to 26 form a G1 region; the sequence is GHVDHGKT. 19-26 contacts GTP; it reads GHVDHGKT. Position 26 (threonine 26) interacts with Mg(2+). The segment at 62-66 is G2; that stretch reads GITIN. The segment at 83-86 is G3; it reads DAPG. GTP is bound by residues 83 to 87 and 138 to 141; these read DAPGH and NKAD. The G4 stretch occupies residues 138 to 141; that stretch reads NKAD. The interval 175 to 177 is G5; sequence SGL.

It belongs to the TRAFAC class translation factor GTPase superfamily. Classic translation factor GTPase family. EF-Tu/EF-1A subfamily. In terms of assembly, monomer.

The protein resides in the cytoplasm. It catalyses the reaction GTP + H2O = GDP + phosphate + H(+). Its function is as follows. GTP hydrolase that promotes the GTP-dependent binding of aminoacyl-tRNA to the A-site of ribosomes during protein biosynthesis. The protein is Elongation factor Tu of Nocardia farcinica (strain IFM 10152).